The primary structure comprises 191 residues: MAPSLHPLIDNGITPGSGSFAGGKLRCHCASDRVEVTLNSNVAHNHACGCSKCWKPSGSLFSIVGVVPRDAVSVTANASKLSVVDKEATIQRYGCKDCGVHLFGRIEKDHPFRGLDFVHVELSDEKGWQEPQFAGFVSSIIEQGSHPKEMDEVRAKFKALGLQTYDVLSPALMDLISTFTAQASGIRFANL.

Residues 20–166 (FAGGKLRCHC…FKALGLQTYD (147 aa)) enclose the CENP-V/GFA domain. Residues cysteine 27, cysteine 29, cysteine 48, cysteine 50, cysteine 53, cysteine 95, and cysteine 98 each contribute to the Zn(2+) site.

The protein belongs to the Gfa family. Zn(2+) is required as a cofactor.

It catalyses the reaction S-(hydroxymethyl)glutathione = glutathione + formaldehyde. It functions in the pathway one-carbon metabolism; formaldehyde degradation; formate from formaldehyde (glutathione route): step 1/3. Functionally, catalyzes the condensation of formaldehyde and glutathione to S-hydroxymethylglutathione. This Penicillium rubens (strain ATCC 28089 / DSM 1075 / NRRL 1951 / Wisconsin 54-1255) (Penicillium chrysogenum) protein is Putative glutathione-dependent formaldehyde-activating enzyme.